The following is a 681-amino-acid chain: DNA ligase (681 aa).

NAD(+) contacts are provided by residues 35 to 39 (DAEYD), 84 to 85 (SL), and E115. K117 functions as the N6-AMP-lysine intermediate in the catalytic mechanism. R138, E175, K293, and K317 together coordinate NAD(+). Zn(2+) contacts are provided by C411, C414, C429, and C435. The BRCT domain occupies 598–681 (RTNLAVPGKT…SLLRDTSSSE (84 aa)).

It belongs to the NAD-dependent DNA ligase family. LigA subfamily. Mg(2+) is required as a cofactor. Requires Mn(2+) as cofactor.

It catalyses the reaction NAD(+) + (deoxyribonucleotide)n-3'-hydroxyl + 5'-phospho-(deoxyribonucleotide)m = (deoxyribonucleotide)n+m + AMP + beta-nicotinamide D-nucleotide.. Its function is as follows. DNA ligase that catalyzes the formation of phosphodiester linkages between 5'-phosphoryl and 3'-hydroxyl groups in double-stranded DNA using NAD as a coenzyme and as the energy source for the reaction. It is essential for DNA replication and repair of damaged DNA. This is DNA ligase from Nitrosomonas europaea (strain ATCC 19718 / CIP 103999 / KCTC 2705 / NBRC 14298).